We begin with the raw amino-acid sequence, 411 residues long: Protein Brevis radix-like 2 (411 aa).

Disordered regions lie at residues 10–31 (KDGG…KSLT) and 103–149 (AAPS…DDDE). Residues 20–31 (ATATPNSGKSLT) are compositionally biased toward polar residues. Positions 136–149 (GEEDYDDDDDDDDE) are enriched in acidic residues. A BRX 1 domain is found at 161 to 217 (REWTAQVEPGVQITFVSIPGGAGNDLKRIRFSREMFNKWEAQRWWGENYDRVVELYN). Disordered regions lie at residues 245-294 (SRVG…VAAA) and 324-346 (AGPA…ASVS). Positions 276-294 (SRTASSKAQLSSSSSVAAA) are enriched in low complexity. Positions 356–411 (TEWVEQDEPGVSITIREFGDGTRELRRVRFSRERFGEERAKVWWEQNRDRIHAQYL) constitute a BRX 2 domain.

This sequence belongs to the BRX family.

It localises to the nucleus. The chain is Protein Brevis radix-like 2 (BRXL2) from Oryza sativa subsp. japonica (Rice).